The chain runs to 245 residues: 1-(5-phosphoribosyl)-5-[(5-phosphoribosylamino)methylideneamino] imidazole-4-carboxamide isomerase (245 aa).

Asp-7 acts as the Proton acceptor in catalysis. Asp-129 (proton donor) is an active-site residue.

This sequence belongs to the HisA/HisF family.

It localises to the cytoplasm. The catalysed reaction is 1-(5-phospho-beta-D-ribosyl)-5-[(5-phospho-beta-D-ribosylamino)methylideneamino]imidazole-4-carboxamide = 5-[(5-phospho-1-deoxy-D-ribulos-1-ylimino)methylamino]-1-(5-phospho-beta-D-ribosyl)imidazole-4-carboxamide. It functions in the pathway amino-acid biosynthesis; L-histidine biosynthesis; L-histidine from 5-phospho-alpha-D-ribose 1-diphosphate: step 4/9. The chain is 1-(5-phosphoribosyl)-5-[(5-phosphoribosylamino)methylideneamino] imidazole-4-carboxamide isomerase from Escherichia coli O127:H6 (strain E2348/69 / EPEC).